A 323-amino-acid chain; its full sequence is tRNA-cytidine(32) 2-sulfurtransferase (323 aa).

The short motif at 49-54 is the PP-loop motif element; the sequence is SGGKDS. [4Fe-4S] cluster is bound by residues C124, C127, and C215.

Belongs to the TtcA family. Homodimer. The cofactor is Mg(2+). [4Fe-4S] cluster is required as a cofactor.

It localises to the cytoplasm. It carries out the reaction cytidine(32) in tRNA + S-sulfanyl-L-cysteinyl-[cysteine desulfurase] + AH2 + ATP = 2-thiocytidine(32) in tRNA + L-cysteinyl-[cysteine desulfurase] + A + AMP + diphosphate + H(+). It participates in tRNA modification. In terms of biological role, catalyzes the ATP-dependent 2-thiolation of cytidine in position 32 of tRNA, to form 2-thiocytidine (s(2)C32). The sulfur atoms are provided by the cysteine/cysteine desulfurase (IscS) system. The polypeptide is tRNA-cytidine(32) 2-sulfurtransferase (Shewanella denitrificans (strain OS217 / ATCC BAA-1090 / DSM 15013)).